Here is a 236-residue protein sequence, read N- to C-terminus: Eukaryotic translation initiation factor 3 subunit K (236 aa).

Residues 48-218 (CDCNANRTLL…EAKKAEIRED (171 aa)) form the PCI domain.

It belongs to the eIF-3 subunit K family.

The protein resides in the cytoplasm. Component of the eukaryotic translation initiation factor 3 (eIF-3) complex, which is involved in protein synthesis of a specialized repertoire of mRNAs and, together with other initiation factors, stimulates binding of mRNA and methionyl-tRNAi to the 40S ribosome. The eIF-3 complex specifically targets and initiates translation of a subset of mRNAs involved in cell proliferation. This is Eukaryotic translation initiation factor 3 subunit K from Pyricularia oryzae (strain Y34) (Rice blast fungus).